Reading from the N-terminus, the 224-residue chain is Uracil-DNA glycosylase (224 aa).

Asp-64 functions as the Proton acceptor in the catalytic mechanism.

It belongs to the uracil-DNA glycosylase (UDG) superfamily. UNG family.

The protein localises to the cytoplasm. It carries out the reaction Hydrolyzes single-stranded DNA or mismatched double-stranded DNA and polynucleotides, releasing free uracil.. Functionally, excises uracil residues from the DNA which can arise as a result of misincorporation of dUMP residues by DNA polymerase or due to deamination of cytosine. This chain is Uracil-DNA glycosylase, found in Geobacillus sp. (strain WCH70).